A 652-amino-acid chain; its full sequence is Cleavage and polyadenylation specificity factor subunit 6 (652 aa).

The segment at 20-85 is disordered; it reads QAQDEFGGDG…GVYHQSSGSL (66 aa). An RRM domain is found at 93–173; that stretch reads YQLYVGNLTW…QAPVVTYPSK (81 aa). Disordered regions lie at residues 184 to 440 and 518 to 652; these read KTRP…QQMG and SYNR…RSRH. The span at 187-203 shows a compositional bias: pro residues; that stretch reads PVPPPQQNGPPRGPAPP. Gly residues predominate over residues 205 to 223; that stretch reads MGGGPMPTGHPGGPQGGGP. 3 stretches are compositionally biased toward pro residues: residues 256–266, 295–307, and 338–352; these read SGPPRMQPPMH, GPRP…PPQR, and PQGP…PGPG. A compositionally biased stretch (low complexity) spans 391-406; the sequence is PGMNMPPQQGMNMTPQ. Residues 420–435 are compositionally biased toward pro residues; sequence GPWPPPQGKPPGPFPD. Residues 518 to 528 show a composition bias toward basic and acidic residues; it reads SYNRRERSRSR. Positions 529–538 are enriched in basic residues; it reads ERSHRSRQRR. The span at 539-590 shows a compositional bias: basic and acidic residues; that stretch reads ERSTSRYRERSRERERDRDRERERDGGSYRERSRSRERERQAPDHYRDDSRS. Residue S596 is modified to Phosphoserine. Low complexity predominate over residues 598-610; it reads EPVVAEAAEAPSS. Over residues 612–652 the composition is skewed to basic and acidic residues; sequence RYYEDRERYRSSDRERRDRDRDRDRERERDRDRREEHRSRH.

The protein belongs to the RRM CPSF6/7 family.

It is found in the nucleus. May play a role in pre-mRNA 3'-processing. This chain is Cleavage and polyadenylation specificity factor subunit 6, found in Drosophila melanogaster (Fruit fly).